A 203-amino-acid chain; its full sequence is Pyridoxal 5'-phosphate synthase subunit PdxT (203 aa).

51 to 53 contributes to the L-glutamine binding site; sequence GES. The Nucleophile role is filled by C83. Residues R110 and 137 to 138 contribute to the L-glutamine site; that span reads IR. Residues H172 and E174 each act as charge relay system in the active site.

It belongs to the glutaminase PdxT/SNO family. In terms of assembly, in the presence of PdxS, forms a dodecamer of heterodimers. Only shows activity in the heterodimer.

It catalyses the reaction aldehydo-D-ribose 5-phosphate + D-glyceraldehyde 3-phosphate + L-glutamine = pyridoxal 5'-phosphate + L-glutamate + phosphate + 3 H2O + H(+). The enzyme catalyses L-glutamine + H2O = L-glutamate + NH4(+). Its pathway is cofactor biosynthesis; pyridoxal 5'-phosphate biosynthesis. In terms of biological role, catalyzes the hydrolysis of glutamine to glutamate and ammonia as part of the biosynthesis of pyridoxal 5'-phosphate. The resulting ammonia molecule is channeled to the active site of PdxS. The chain is Pyridoxal 5'-phosphate synthase subunit PdxT from Thermoplasma acidophilum (strain ATCC 25905 / DSM 1728 / JCM 9062 / NBRC 15155 / AMRC-C165).